The chain runs to 239 residues: ATP-dependent dethiobiotin synthetase BioD (239 aa).

Residue 13 to 18 (EIGKTV) participates in ATP binding. Position 17 (threonine 17) interacts with Mg(2+). The active site involves lysine 38. Threonine 42 contributes to the substrate binding site. Positions 59 and 111 each coordinate Mg(2+). ATP is bound by residues 111–114 (EGAG), 175–176 (NQ), and 204–206 (PSL).

It belongs to the dethiobiotin synthetase family. Homodimer. Mg(2+) is required as a cofactor.

Its subcellular location is the cytoplasm. The enzyme catalyses (7R,8S)-7,8-diammoniononanoate + CO2 + ATP = (4R,5S)-dethiobiotin + ADP + phosphate + 3 H(+). It participates in cofactor biosynthesis; biotin biosynthesis; biotin from 7,8-diaminononanoate: step 1/2. Functionally, catalyzes a mechanistically unusual reaction, the ATP-dependent insertion of CO2 between the N7 and N8 nitrogen atoms of 7,8-diaminopelargonic acid (DAPA, also called 7,8-diammoniononanoate) to form a ureido ring. This chain is ATP-dependent dethiobiotin synthetase BioD, found in Geobacillus sp. (strain WCH70).